We begin with the raw amino-acid sequence, 610 residues long: Probable methyltransferase PMT22 (610 aa).

Residues 1–10 (MIKNIFQSRK) lie on the Cytoplasmic side of the membrane. A helical; Signal-anchor for type II membrane protein membrane pass occupies residues 11-31 (LSGLCVLSILLVSVTILLLTN). Residues 32-610 (DTIDLFPYLS…LVGLKSSWRP (579 aa)) are Lumenal-facing. Residues 56 to 69 (STPISSPTNDSSPP) are compositionally biased toward low complexity. A disordered region spans residues 56-81 (STPISSPTNDSSPPLESPVNQTRVDD). Asn-64, Asn-75, Asn-100, Asn-400, Asn-469, and Asn-546 each carry an N-linked (GlcNAc...) asparagine glycan.

Belongs to the methyltransferase superfamily.

Its subcellular location is the endoplasmic reticulum membrane. The chain is Probable methyltransferase PMT22 from Arabidopsis thaliana (Mouse-ear cress).